The sequence spans 428 residues: Enolase (428 aa).

Q163 contributes to the (2R)-2-phosphoglycerate binding site. E205 acts as the Proton donor in catalysis. Mg(2+)-binding residues include D242, E285, and D312. (2R)-2-phosphoglycerate contacts are provided by K337, R366, S367, and K388. Residue K337 is the Proton acceptor of the active site.

The protein belongs to the enolase family. Mg(2+) serves as cofactor.

It is found in the cytoplasm. The protein resides in the secreted. It localises to the cell surface. The catalysed reaction is (2R)-2-phosphoglycerate = phosphoenolpyruvate + H2O. Its pathway is carbohydrate degradation; glycolysis; pyruvate from D-glyceraldehyde 3-phosphate: step 4/5. Functionally, catalyzes the reversible conversion of 2-phosphoglycerate (2-PG) into phosphoenolpyruvate (PEP). It is essential for the degradation of carbohydrates via glycolysis. The sequence is that of Enolase from Neisseria meningitidis serogroup C (strain 053442).